Here is a 192-residue protein sequence, read N- to C-terminus: Imidazoleglycerol-phosphate dehydratase (192 aa).

Belongs to the imidazoleglycerol-phosphate dehydratase family.

The protein resides in the cytoplasm. It carries out the reaction D-erythro-1-(imidazol-4-yl)glycerol 3-phosphate = 3-(imidazol-4-yl)-2-oxopropyl phosphate + H2O. It participates in amino-acid biosynthesis; L-histidine biosynthesis; L-histidine from 5-phospho-alpha-D-ribose 1-diphosphate: step 6/9. The sequence is that of Imidazoleglycerol-phosphate dehydratase from Clostridioides difficile (strain 630) (Peptoclostridium difficile).